We begin with the raw amino-acid sequence, 202 residues long: ATP-dependent Clp protease proteolytic subunit (202 aa).

Ser106 functions as the Nucleophile in the catalytic mechanism. The active site involves His131.

This sequence belongs to the peptidase S14 family. In terms of assembly, fourteen ClpP subunits assemble into 2 heptameric rings which stack back to back to give a disk-like structure with a central cavity, resembling the structure of eukaryotic proteasomes.

The protein localises to the cytoplasm. It catalyses the reaction Hydrolysis of proteins to small peptides in the presence of ATP and magnesium. alpha-casein is the usual test substrate. In the absence of ATP, only oligopeptides shorter than five residues are hydrolyzed (such as succinyl-Leu-Tyr-|-NHMec, and Leu-Tyr-Leu-|-Tyr-Trp, in which cleavage of the -Tyr-|-Leu- and -Tyr-|-Trp bonds also occurs).. In terms of biological role, cleaves peptides in various proteins in a process that requires ATP hydrolysis. Has a chymotrypsin-like activity. Plays a major role in the degradation of misfolded proteins. This Methylibium petroleiphilum (strain ATCC BAA-1232 / LMG 22953 / PM1) protein is ATP-dependent Clp protease proteolytic subunit.